We begin with the raw amino-acid sequence, 64 residues long: DNA gyrase inhibitor YacG (64 aa).

Residues Cys-9, Cys-12, Cys-28, and Cys-32 each coordinate Zn(2+). Residues 45–64 (KRIPSSGDLSESDDWSEEQK) form a disordered region. Residues 54 to 64 (SESDDWSEEQK) are compositionally biased toward acidic residues.

The protein belongs to the DNA gyrase inhibitor YacG family. In terms of assembly, interacts with GyrB. Requires Zn(2+) as cofactor.

In terms of biological role, inhibits all the catalytic activities of DNA gyrase by preventing its interaction with DNA. Acts by binding directly to the C-terminal domain of GyrB, which probably disrupts DNA binding by the gyrase. The polypeptide is DNA gyrase inhibitor YacG (Citrobacter koseri (strain ATCC BAA-895 / CDC 4225-83 / SGSC4696)).